Here is a 2178-residue protein sequence, read N- to C-terminus: MLITREQLMKIASIPLKRKEPEYNLILDALENFNRDIEGTSVKEIYSKLSKLNELVDNYQTKYPSSGRNLALENFRDSLYSELRELIKNSRTSTIASKNLSFIWIGGPISDQSLEYYNMWKMFNKDYNIRLFYDKNSLLVNTLKTAIIQESSKVIIEQNQSNILDGTYGHNKFYSDRMKLIYRYKRELKMLYENMKQNNSVDDIIINFLSNYFKYDIGKLNNQKENNNNKMIAIGATDINTENILTNKLKSYYYQELIQTNNLAAASDILRIAILKKYGGVYCDLDFLPGVNLSLFNDISKPNGMDSNYWEAAIFEAIANEKKLMNNYPYKYMEQVPSEIKERILSFVRNHDINDLILPLGDIKISQLEILLSRLKAATGKKTFSNAFIISNNDSLTLNNLISQLENRYEILNSIIQEKFKICETYDSYINSVSELVLETTPKNLSMDGSSFYQQIIGYLSSGFKPEVNSTVFFSGPNIYSSATCDTYHFIKNTFDMLSSQNQEIFEASNNLYFSKTHDEFKSSWLLRSNIAEKEFQKLIKTYIGRTLNYEDGLNFNKWKRVTTSELLKVIEEVNSTKIYENYDLNMILQIQGDDISYESAVNVFGKNPNKSILIQGVDDFANVFYFENGIVQSDNINNILSRFNDIKKIKLTLIGHGENVFNPKLFGGKTVNDLYTNIIKPKLQHLLEREGVILKNKYLKINILGCYMFTPKVDINSTFVGKLFNKISRDLQPKGFSKNQLEISANKYAIRINREGKREVLDYFGKWVSNTDLIAEQISNKYVVYWNEVENTLSARVEQLNKVAEFAKDINSIIQTTNNQELKQSLVNTYADLITTLYSELLKEDIPFELDNIQIKERIILNEISRLHDFSNIILDFYQKNNISNNMIILFDSIIKEKDYYNVKLANKITGETSVIKTYSDSLWNFTNKYKKIVDDIKGIIVKDINGEFIKKADFEIEQNPSLLNSAMLMQLLIDYKPYTEILTNMNTSLKVQAYAQIFQLSIGAIQEATEIVTIISDALNANFNILSKLKVGSSVASVIIDGINLIAALTELKNVKTNFERKLIEAKVGMYSIGFILESSSLISGLLGATAVSEILGVISVPVAGILVGLPSLVNNILVLGEKYNQILDYFSKFYPIVGKNPFSIQDNIIIPYDDIAITELNFKYNKFKYGYAKISGLKVGLVTHIGENIDHYFSAPSLDHYIELSIYPALKLNDTNLPKGNVVLLPSGLNKVYKPEISAIAGANSQEGNGVEVLNLIRNYYVDSNGNTKFPWKYEAPFEYSFSYMRVEYFDTKVNVILDNENKTLIIPVLTIDEMRNKISYEILGDGGQYNVILPVNQTNINIVSNKNDIWNFDVSYIVKESKIEDNKFVLDGFINNIFSTLKVSNDGFKIGKQFISIKNTPRAINLSFKINNNIVIVSIYLNHEKSNSITIISSDLNDIKNNFDNLLDNINYIGLGSISDNTINCIVRNDEVYMEGKIFLNEKKLVFIQNELELHLYDSVNKDSQYLINNPINNVVKYKDGYIVEGTFLINSTENKYSLYIENNKIMLKGLYLESSVFKTIQDKIYSKEKVNDYILSLIKKFFTVNIQLCPFMIVSGVDENNRYLEYMLSTNNKWIINGGYWENDFNNYKIVDFEKCNVIVSGSNKLNSEGDLADTIDVLDKDLENLYIDSVIIIPKVYTKKIIIHPIPNNPQINIINTQSIHDKCHLIIDSVLTNNYHWESDGDDLIITNGLDINIRILQGLSFGFKYKNIYLKFSNYDELSLNDFLLQNYNVKGLYYINGELHYKNIPGDTFEYGWINIDSRWYFFDSINLIAKKGYQEIEGERYYFNPNTGVQESGVFLTPNGLEYFTNKHASSKRWGRAINYTGWLTLDGNKYYFQSNSKAVTGLQKISDKYYYFNDNGQMQIKWQIINNNKYYFDGNTGEAIIGWFNNNKERYYFDSEGRLLTGYQVIGDKSYYFSDNINGNWEEGSGVLKSGIFKTPSGFKLFSSEGDKSAINYKGWLDLNGNKYYFNSDSIAVTGSYNIKGIQYYFNPKTAVLTNGWYTLDNNNYYVSNGHNVLGYQDIDGKGYYFDPSTGIQKAGVFPTPNGLRYFTMKPIDGQRWGQCIDYTGWLHLNGNKYYFGYYNSAVTGWRVLGGKRYFFNIKTGAATTGLLTLSGKRYYFNEKGEQLTLV.

Positions 1-93 are four-helical bundle; it reads MLITREQLMK…RELIKNSRTS (93 aa). The region spanning 98 to 474 is the GT44 domain; sequence KNLSFIWIGG…KPEVNSTVFF (377 aa). A glucosyltransferase region region spans residues 98 to 474; sequence KNLSFIWIGG…KPEVNSTVFF (377 aa). The tract at residues 98 to 474 is N-acetylglucosaminyltransferase region; the sequence is KNLSFIWIGG…KPEVNSTVFF (377 aa). UDP-N-acetyl-alpha-D-glucosamine is bound by residues 103-105, asparagine 141, 267-271, and 284-286; these read IWI, SDILR, and DLD. Positions 284, 286, and 520 each coordinate Mg(2+). 523–525 contributes to the UDP-N-acetyl-alpha-D-glucosamine binding site; that stretch reads SSW. Residues 549–806 form an autoprocessing region region; it reads NYEDGLNFNK…RVEQLNKVAE (258 aa). 1D-myo-inositol hexakisphosphate is bound by residues asparagine 557, lysine 607, and lysine 651. The Peptidase C80 domain maps to 574–787; it reads VNSTKIYENY…QISNKYVVYW (214 aa). Residue histidine 657 is the For protease activity of the active site. Residue cysteine 707 is the Nucleophile; for protease activity of the active site. 1D-myo-inositol hexakisphosphate is bound by residues 758 to 759 and lysine 782; that span reads KR. A translocation region region spans residues 807–1485; that stretch reads FAKDINSIIQ…VYMEGKIFLN (679 aa). Cell wall-binding repeat units follow at residues 1799–1818, 1820–1839, 1870–1889, 1890–1909, 1910–1929, 1931–1950, 1951–1970, 2004–2023, 2024–2043, 2045–2060, 2064–2083, 2114–2133, 2134–2153, and 2155–2174; these read EYGW…INLI, KKGY…NTGV, YTGW…NSKA, VTGL…NGQM, QIKW…NTGE, IIGW…EGRL, LTGY…NING, YKGW…DSIA, VTGS…KTAV, TNGW…YVSN, VLGY…STGI, YTGW…YNSA, VTGW…KTGA, and TTGL…KGEQ.

It belongs to the clostridial glucosylating toxin (LCGT) family. Requires Mn(2+) as cofactor. It depends on Mg(2+) as a cofactor. Post-translationally, undergoes autocatalytic cleavage to release the N-terminal part (N-acetylglucosaminyltransferase TcdA), which constitutes the active part of the toxin, in the host cytosol. 1D-myo-inositol hexakisphosphate-binding (InsP6) activates the peptidase C80 domain and promotes autoprocessing.

The protein localises to the secreted. The protein resides in the host endosome membrane. It localises to the host cytoplasm. It is found in the host cytosol. Its subcellular location is the host cell membrane. The enzyme catalyses L-threonyl-[protein] + UDP-N-acetyl-alpha-D-glucosamine = 3-O-(N-acetyl-alpha-D-glucosaminyl)-L-threonyl-[protein] + UDP + H(+). Its activity is regulated as follows. Protease activity is activated upon binding to 1D-myo-inositol hexakisphosphate (InsP6), which induces conformational reorganization. Precursor of a cytotoxin, which enters into host cells and mediates autoprocessing to release the active toxin (N-acetylglucosaminyltransferase TcdA) into the host cytosol. Once entered into host cells, acidification in the endosome promotes the membrane insertion of the translocation region and formation of a pore, leading to translocation of the GT44 and peptidase C80 domains across the endosomal membrane. This activates the peptidase C80 domain and autocatalytic processing, releasing the N-terminal part (N-acetylglucosaminyltransferase TcdA), which constitutes the active part of the toxin, in the cytosol. Functionally, active form of the toxin, which is released into the host cytosol following autoprocessing and inactivates small GTPases. Acts by mediating monoglycosylation of small GTPases of the Rho family (Rac1, RhoA, RhoG and Cdc42) in host cells at the conserved threonine residue located in the switch I region ('Thr-37/35'), using UDP-N-acetyl-alpha-D-glucosamine as the sugar donor. Monoglycosylation of host small GTPases completely prevents the recognition of the downstream effector, blocking the GTPases in their inactive form, leading to actin cytoskeleton disruption and cell death. This chain is Toxin A (tcdA), found in Clostridium novyi.